Here is a 146-residue protein sequence, read N- to C-terminus: Ecotin-like protein 1 (146 aa).

The protein belongs to the protease inhibitor I11 (ecotin) family.

The polypeptide is Ecotin-like protein 1 (ISP1) (Leishmania braziliensis).